The sequence spans 92 residues: DNA-binding protein HU (92 aa).

Residues 58–92 (AGTARNPRTGETVNRPASKTARFQVGEGLKSSLNS) are disordered.

This sequence belongs to the bacterial histone-like protein family. In terms of assembly, homodimer.

In terms of biological role, histone-like DNA-binding protein which is capable of wrapping DNA to stabilize it, and thus to prevent its denaturation under extreme environmental conditions. The polypeptide is DNA-binding protein HU (hup) (Caulobacter vibrioides (strain ATCC 19089 / CIP 103742 / CB 15) (Caulobacter crescentus)).